The primary structure comprises 367 residues: DNA replication and repair protein RecF (367 aa).

30–37 contributes to the ATP binding site; the sequence is GANGSGKT.

Belongs to the RecF family.

It localises to the cytoplasm. The RecF protein is involved in DNA metabolism; it is required for DNA replication and normal SOS inducibility. RecF binds preferentially to single-stranded, linear DNA. It also seems to bind ATP. The sequence is that of DNA replication and repair protein RecF from Pseudomonas fluorescens (strain SBW25).